Consider the following 1013-residue polypeptide: Sodium/potassium-transporting ATPase subunit alpha-3 (1013 aa).

The interval 1–24 is disordered; the sequence is MGDKKDDKDSPKKNKGKERRDLDD. Residues 1 to 77 lie on the Cytoplasmic side of the membrane; the sequence is MGDKKDDKDS…NALTPPPTTP (77 aa). Residues Ser-37 and Ser-56 each carry the phosphoserine modification. Residues 72–74 form an interaction with phosphoinositide-3 kinase region; that stretch reads PPP. The chain crosses the membrane as a helical span at residues 78–98; it reads EWVKFCRQLFGGFSILLWIGA. The Extracellular segment spans residues 99-121; that stretch reads ILCFLAYGIQAGTEDDPSGDNLY. A helical membrane pass occupies residues 122 to 142; it reads LGIVLAAVVIITGCFSYYQEA. Residues 143-278 are Cytoplasmic-facing; the sequence is KSSKIMESFK…VGKTPIAIEI (136 aa). A phosphoserine mark is found at Ser-218 and Ser-265. The chain crosses the membrane as a helical span at residues 279-298; the sequence is EHFIQLITGVAVFLGVSFFI. Residues 299 to 310 lie on the Extracellular side of the membrane; that stretch reads LSLILGYTWLEA. A helical membrane pass occupies residues 311–328; sequence VIFLIGIIVANVPEGLLA. At 329 to 762 the chain is on the cytoplasmic side; sequence TVTVCLTLTA…EEGRLIFDNL (434 aa). Residue Asp-366 is the 4-aspartylphosphate intermediate of the active site. Ser-442 is modified (phosphoserine). At Tyr-548 the chain carries Phosphotyrosine. The Mg(2+) site is built by Asp-707 and Asp-711. The helical transmembrane segment at 763–782 threads the bilayer; the sequence is KKSIAYTLTSNIPEITPFLL. Over 783–792 the chain is Extracellular; the sequence is FIMANIPLPL. Residues 793–813 traverse the membrane as a helical segment; the sequence is GTITILCIDLGTDMVPAISLA. Topologically, residues 814 to 833 are cytoplasmic; sequence YEAAESDIMKRQPRNPRTDK. The chain crosses the membrane as a helical span at residues 834–856; sequence LVNERLISMAYGQIGMIQALGGF. At 857–908 the chain is on the extracellular side; sequence FSYFVILAENGFLPGNLVGIRLNWDDRTVNDLEDSYGQQWTYEQRKVVEFTC. Residues 909 to 928 form a helical membrane-spanning segment; that stretch reads HTAFFVSIVVVQWADLIICK. Residues 929-941 lie on the Cytoplasmic side of the membrane; that stretch reads TRRNSVFQQGMKN. Ser-933 carries the post-translational modification Phosphoserine; by PKA. The helical transmembrane segment at 942 to 960 threads the bilayer; the sequence is KILIFGLFEETALAAFLSY. At 961–975 the chain is on the extracellular side; that stretch reads CPGMDVALRMYPLKP. Residues 976–996 traverse the membrane as a helical segment; the sequence is SWWFCAFPYSFLIFVYDEIRK. Over 997 to 1013 the chain is Cytoplasmic; it reads LILRRNPGGWVEKETYY.

Belongs to the cation transport ATPase (P-type) (TC 3.A.3) family. Type IIC subfamily. The sodium/potassium-transporting ATPase is composed of a catalytic alpha subunit, an auxiliary non-catalytic beta subunit and an additional regulatory subunit. Interacts with regulatory subunit FXYD1.

Its subcellular location is the cell membrane. The enzyme catalyses K(+)(out) + Na(+)(in) + ATP + H2O = K(+)(in) + Na(+)(out) + ADP + phosphate + H(+). Functionally, this is the catalytic component of the active enzyme, which catalyzes the hydrolysis of ATP coupled with the exchange of sodium and potassium ions across the plasma membrane. This action creates the electrochemical gradient of sodium and potassium ions, providing the energy for active transport of various nutrients. This is Sodium/potassium-transporting ATPase subunit alpha-3 (ATP1A3) from Homo sapiens (Human).